We begin with the raw amino-acid sequence, 464 residues long: tRNA modification GTPase MnmE (464 aa).

3 residues coordinate (6S)-5-formyl-5,6,7,8-tetrahydrofolate: Arg-25, Glu-87, and Lys-130. The 161-residue stretch at Gly-226 to Gly-386 folds into the TrmE-type G domain. Asn-236 is a K(+) binding site. GTP is bound by residues Asn-236 to Ser-241, Thr-255 to Thr-261, and Asp-280 to Gly-283. Residue Ser-240 coordinates Mg(2+). K(+) is bound by residues Thr-255, Ile-257, and Thr-260. Mg(2+) is bound at residue Thr-261. Residue Lys-464 participates in (6S)-5-formyl-5,6,7,8-tetrahydrofolate binding.

The protein belongs to the TRAFAC class TrmE-Era-EngA-EngB-Septin-like GTPase superfamily. TrmE GTPase family. In terms of assembly, homodimer. Heterotetramer of two MnmE and two MnmG subunits. K(+) serves as cofactor.

It localises to the cytoplasm. Its function is as follows. Exhibits a very high intrinsic GTPase hydrolysis rate. Involved in the addition of a carboxymethylaminomethyl (cmnm) group at the wobble position (U34) of certain tRNAs, forming tRNA-cmnm(5)s(2)U34. This is tRNA modification GTPase MnmE from Burkholderia orbicola (strain MC0-3).